Consider the following 133-residue polypeptide: Cytochrome b5 (133 aa).

The 83-residue stretch at 4–86 (EKEYILDEIS…LKNYLVGNFK (83 aa)) folds into the Cytochrome b5 heme-binding domain. Residues histidine 45 and histidine 69 each coordinate heme. A helical membrane pass occupies residues 108–128 (SGTGIMLIVLMALFAIAYGYY).

It belongs to the cytochrome b5 family. In terms of assembly, interacts with alternative squalene epoxidase PHATRDRAFT_45494.

It is found in the endoplasmic reticulum membrane. Its function is as follows. Hemoprotein that functions as an electron carrier for membrane bound monooxygenases involved in sterol biosynthesis. This is Cytochrome b5 from Phaeodactylum tricornutum (strain CCAP 1055/1).